We begin with the raw amino-acid sequence, 106 residues long: Nucleoid-associated protein XC_3243 (106 aa).

A disordered region spans residues 82–106 (DAESKERMGSATAGMQLPPGMKLPF).

It belongs to the YbaB/EbfC family. As to quaternary structure, homodimer.

The protein resides in the cytoplasm. Its subcellular location is the nucleoid. Functionally, binds to DNA and alters its conformation. May be involved in regulation of gene expression, nucleoid organization and DNA protection. This Xanthomonas campestris pv. campestris (strain 8004) protein is Nucleoid-associated protein XC_3243.